Reading from the N-terminus, the 38-residue chain is Large ribosomal subunit protein bL36 (38 aa).

Belongs to the bacterial ribosomal protein bL36 family.

This chain is Large ribosomal subunit protein bL36, found in Phytoplasma mali (strain AT).